The primary structure comprises 321 residues: Malate dehydrogenase (321 aa).

Residues 10-15 (GSGMIG) and Asp34 each bind NAD(+). The substrate site is built by Arg83 and Arg89. Residues Asn96 and 119-121 (ITN) each bind NAD(+). Asn121 and Arg152 together coordinate substrate. Residue His176 is the Proton acceptor of the active site.

The protein belongs to the LDH/MDH superfamily. MDH type 3 family.

It catalyses the reaction (S)-malate + NAD(+) = oxaloacetate + NADH + H(+). In terms of biological role, catalyzes the reversible oxidation of malate to oxaloacetate. The protein is Malate dehydrogenase of Bartonella bacilliformis (strain ATCC 35685 / KC583 / Herrer 020/F12,63).